Consider the following 323-residue polypeptide: tRNA-dihydrouridine(16) synthase (323 aa).

Residues 7–9 (PME) and Q68 contribute to the FMN site. C98 (proton donor) is an active-site residue. FMN contacts are provided by residues K139, 200–202 (NGE), and 224–225 (CR).

It belongs to the Dus family. DusC subfamily. FMN serves as cofactor.

The enzyme catalyses 5,6-dihydrouridine(16) in tRNA + NADP(+) = uridine(16) in tRNA + NADPH + H(+). It catalyses the reaction 5,6-dihydrouridine(16) in tRNA + NAD(+) = uridine(16) in tRNA + NADH + H(+). Its function is as follows. Catalyzes the synthesis of 5,6-dihydrouridine (D), a modified base found in the D-loop of most tRNAs, via the reduction of the C5-C6 double bond in target uridines. Specifically modifies U16 in tRNAs. The protein is tRNA-dihydrouridine(16) synthase of Vibrio cholerae serotype O1 (strain ATCC 39315 / El Tor Inaba N16961).